Here is a 535-residue protein sequence, read N- to C-terminus: Dimethylaniline monooxygenase [N-oxide-forming] 2 (535 aa).

Position 2 is an N-acetylalanine (alanine 2). FAD contacts are provided by residues 9–13, glutamate 32, 40–41, and 61–62; these read GAGVS, LW, and NT. Residues 60 to 61 and 195 to 198 each bind NADP(+); these read TN and SASD. Lysine 492 participates in a covalent cross-link: Glycyl lysine isopeptide (Lys-Gly) (interchain with G-Cter in SUMO). The helical transmembrane segment at 510–530 threads the bilayer; sequence FPVSFLLKFLGLFALVLAFLF.

The protein belongs to the FMO family. It depends on FAD as a cofactor. Mg(2+) is required as a cofactor. As to expression, lung.

The protein localises to the microsome membrane. It is found in the endoplasmic reticulum membrane. It catalyses the reaction N,N-dimethylaniline + NADPH + O2 + H(+) = N,N-dimethylaniline N-oxide + NADP(+) + H2O. Functionally, catalyzes the oxidative metabolism of numerous xenobiotics, including mainly therapeutic drugs and insecticides that contain a soft nucleophile, most commonly nitrogen and sulfur and participates to their bioactivation. Most drug substrates are tertiary amines such as prochlorperazine and trifluoperazine which are N-oxygenated to form the N-oxide, or sulfides such as thiourea and ethionamide, which are S-oxygenated to the sulfoxide. Others include primary alkylamines such as N-dodecylamine and octan-1-amine that are sequentially monooxygenated to oximes through intermediate hydroxylamines and both steps are NADPH- and oxygen-dependent. Also metabolized N-Deacetyl ketoconazole (DAK) to N-hydroxy-DAK and appears to further metabolizes N-hydroxy-DAK to two others metabolites. Also catalyzes S-oxygenation of the thioether-containing organophosphate insecticides, phorate and disulfoton. The polypeptide is Dimethylaniline monooxygenase [N-oxide-forming] 2 (Oryctolagus cuniculus (Rabbit)).